Here is a 371-residue protein sequence, read N- to C-terminus: Chaperone protein DnaJ (371 aa).

The 65-residue stretch at 5 to 69 (DYYEILGIAK…QKRAAYDQHG (65 aa)) folds into the J domain. The CR-type zinc-finger motif lies at 127 to 205 (GASKEIHITT…CRGQGKVEEP (79 aa)). Residues C140, C143, C157, C160, C179, C182, C193, and C196 each coordinate Zn(2+). 4 CXXCXGXG motif repeats span residues 140–147 (CEHCKGSG), 157–164 (CTTCRGVG), 179–186 (CPRCHGQG), and 193–200 (CRQCRGQG).

It belongs to the DnaJ family. In terms of assembly, homodimer. Zn(2+) serves as cofactor.

It is found in the cytoplasm. Functionally, participates actively in the response to hyperosmotic and heat shock by preventing the aggregation of stress-denatured proteins and by disaggregating proteins, also in an autonomous, DnaK-independent fashion. Unfolded proteins bind initially to DnaJ; upon interaction with the DnaJ-bound protein, DnaK hydrolyzes its bound ATP, resulting in the formation of a stable complex. GrpE releases ADP from DnaK; ATP binding to DnaK triggers the release of the substrate protein, thus completing the reaction cycle. Several rounds of ATP-dependent interactions between DnaJ, DnaK and GrpE are required for fully efficient folding. Also involved, together with DnaK and GrpE, in the DNA replication of plasmids through activation of initiation proteins. The chain is Chaperone protein DnaJ from Hamiltonella defensa subsp. Acyrthosiphon pisum (strain 5AT).